Reading from the N-terminus, the 317-residue chain is Sulfate adenylyltransferase subunit 2 (317 aa).

Disordered stretches follow at residues 1–21 (MPDS…APLD) and 298–317 (RAID…EGYF).

This sequence belongs to the PAPS reductase family. CysD subfamily. Heterodimer composed of CysD, the smaller subunit, and CysN.

It catalyses the reaction sulfate + ATP + H(+) = adenosine 5'-phosphosulfate + diphosphate. It functions in the pathway sulfur metabolism; hydrogen sulfide biosynthesis; sulfite from sulfate: step 1/3. In terms of biological role, with CysN forms the ATP sulfurylase (ATPS) that catalyzes the adenylation of sulfate producing adenosine 5'-phosphosulfate (APS) and diphosphate, the first enzymatic step in sulfur assimilation pathway. APS synthesis involves the formation of a high-energy phosphoric-sulfuric acid anhydride bond driven by GTP hydrolysis by CysN coupled to ATP hydrolysis by CysD. In Rhizobium etli (strain CIAT 652), this protein is Sulfate adenylyltransferase subunit 2.